The sequence spans 128 residues: Large-conductance mechanosensitive channel (128 aa).

2 consecutive transmembrane segments (helical) span residues 10–30 (FAMR…SAFG) and 76–96 (GLFI…FMMI).

This sequence belongs to the MscL family. In terms of assembly, homopentamer.

The protein resides in the cell inner membrane. In terms of biological role, channel that opens in response to stretch forces in the membrane lipid bilayer. May participate in the regulation of osmotic pressure changes within the cell. This is Large-conductance mechanosensitive channel from Haemophilus influenzae (strain PittEE).